Consider the following 716-residue polypeptide: Probable glutamate--tRNA ligase, cytoplasmic (716 aa).

S190 carries the post-translational modification Phosphoserine. 210–212 (RFP) provides a ligand contact to L-glutamate. Residues 215–224 (PSGYLHIGHA) carry the 'HIGH' region motif. H220 contacts ATP. Residues D246, 386–390 (YDFAC), and R404 each bind L-glutamate. ATP contacts are provided by residues E407 and 441–445 (LLSKR). A 'KMSKS' region motif is present at residues 441–445 (LLSKR).

This sequence belongs to the class-I aminoacyl-tRNA synthetase family. Glutamate--tRNA ligase type 2 subfamily. Component of a yeast aminoacyl-tRNA synthase (aaRS) complex formed by methionyl-tRNA synthase, glutamyl-tRNA synthase and the tRNA aminoacylation cofactor arc1 in a stoichiometric complex. Interacts with arc1/SPAC30C2.04.

It is found in the cytoplasm. Its subcellular location is the nucleus. It carries out the reaction tRNA(Glu) + L-glutamate + ATP = L-glutamyl-tRNA(Glu) + AMP + diphosphate. Functionally, catalyzes the attachment of glutamate to tRNA(Glu) in a two-step reaction: glutamate is first activated by ATP to form Glu-AMP and then transferred to the acceptor end of tRNA(Glu). This chain is Probable glutamate--tRNA ligase, cytoplasmic (gus1), found in Schizosaccharomyces pombe (strain 972 / ATCC 24843) (Fission yeast).